Consider the following 187-residue polypeptide: Ribosome-recycling factor (187 aa).

Belongs to the RRF family.

The protein localises to the cytoplasm. In terms of biological role, responsible for the release of ribosomes from messenger RNA at the termination of protein biosynthesis. May increase the efficiency of translation by recycling ribosomes from one round of translation to another. The protein is Ribosome-recycling factor of Methylorubrum populi (strain ATCC BAA-705 / NCIMB 13946 / BJ001) (Methylobacterium populi).